We begin with the raw amino-acid sequence, 110 residues long: Iron-sulfur cluster assembly protein CyaY (110 aa).

The protein belongs to the frataxin family.

In terms of biological role, involved in iron-sulfur (Fe-S) cluster assembly. May act as a regulator of Fe-S biogenesis. This Pseudomonas syringae pv. tomato (strain ATCC BAA-871 / DC3000) protein is Iron-sulfur cluster assembly protein CyaY.